The primary structure comprises 361 residues: Peptide chain release factor 1 (361 aa).

N5-methylglutamine is present on glutamine 237. Residues 285–296 (DEKRRSAEESTR) are compositionally biased toward basic and acidic residues. Residues 285 to 305 (DEKRRSAEESTRRNLVGSGDR) form a disordered region.

It belongs to the prokaryotic/mitochondrial release factor family. In terms of processing, methylated by PrmC. Methylation increases the termination efficiency of RF1.

The protein localises to the cytoplasm. Its function is as follows. Peptide chain release factor 1 directs the termination of translation in response to the peptide chain termination codons UAG and UAA. The polypeptide is Peptide chain release factor 1 (Shewanella sediminis (strain HAW-EB3)).